A 590-amino-acid chain; its full sequence is DNA primase (590 aa).

The segment at 37 to 61 (CPFHKEKTPSFSVSPTKQFYHCFSC) adopts a CHC2-type zinc-finger fold. Residues 255–337 (GRILVVEGYM…DKSLHFLFLP (83 aa)) form the Toprim domain. Mg(2+) is bound by residues Glu-261, Asp-305, and Asp-307.

It belongs to the DnaG primase family. As to quaternary structure, monomer. Interacts with DnaB. Zn(2+) is required as a cofactor. It depends on Mg(2+) as a cofactor.

The catalysed reaction is ssDNA + n NTP = ssDNA/pppN(pN)n-1 hybrid + (n-1) diphosphate.. Functionally, RNA polymerase that catalyzes the synthesis of short RNA molecules used as primers for DNA polymerase during DNA replication. The protein is DNA primase of Neisseria meningitidis serogroup B (strain ATCC BAA-335 / MC58).